A 130-amino-acid chain; its full sequence is Small ribosomal subunit protein uS9 (130 aa).

The protein belongs to the universal ribosomal protein uS9 family.

The sequence is that of Small ribosomal subunit protein uS9 from Thioalkalivibrio sulfidiphilus (strain HL-EbGR7).